The primary structure comprises 366 residues: Phosphoserine aminotransferase (366 aa).

Residue R42 coordinates L-glutamate. Pyridoxal 5'-phosphate contacts are provided by residues 76–77, W101, T156, D178, and Q201; that span reads AT. Position 202 is an N6-(pyridoxal phosphate)lysine (K202). Position 243–244 (243–244) interacts with pyridoxal 5'-phosphate; the sequence is NT.

This sequence belongs to the class-V pyridoxal-phosphate-dependent aminotransferase family. SerC subfamily. As to quaternary structure, homodimer. Pyridoxal 5'-phosphate serves as cofactor.

It localises to the cytoplasm. It catalyses the reaction O-phospho-L-serine + 2-oxoglutarate = 3-phosphooxypyruvate + L-glutamate. The enzyme catalyses 4-(phosphooxy)-L-threonine + 2-oxoglutarate = (R)-3-hydroxy-2-oxo-4-phosphooxybutanoate + L-glutamate. It functions in the pathway amino-acid biosynthesis; L-serine biosynthesis; L-serine from 3-phospho-D-glycerate: step 2/3. Its pathway is cofactor biosynthesis; pyridoxine 5'-phosphate biosynthesis; pyridoxine 5'-phosphate from D-erythrose 4-phosphate: step 3/5. In terms of biological role, catalyzes the reversible conversion of 3-phosphohydroxypyruvate to phosphoserine and of 3-hydroxy-2-oxo-4-phosphonooxybutanoate to phosphohydroxythreonine. This Aromatoleum aromaticum (strain DSM 19018 / LMG 30748 / EbN1) (Azoarcus sp. (strain EbN1)) protein is Phosphoserine aminotransferase.